The sequence spans 228 residues: Protein GlxC (228 aa).

This sequence belongs to the FwdC/FmdC family.

This chain is Protein GlxC (glxC), found in Rhizobium meliloti (strain 1021) (Ensifer meliloti).